The sequence spans 605 residues: Adenine deaminase (605 aa).

This sequence belongs to the metallo-dependent hydrolases superfamily. Adenine deaminase family. It depends on Mn(2+) as a cofactor.

It catalyses the reaction adenine + H2O + H(+) = hypoxanthine + NH4(+). In Mesorhizobium japonicum (strain LMG 29417 / CECT 9101 / MAFF 303099) (Mesorhizobium loti (strain MAFF 303099)), this protein is Adenine deaminase.